The chain runs to 219 residues: GTP-binding protein Rab-3D (219 aa).

N-acetylalanine is present on alanine 2. 29–37 (GNSSVGKTS) provides a ligand contact to GDP. Residues serine 31, serine 32, valine 33, glycine 34, lysine 35, threonine 36, serine 37, proline 49, and serine 53 each contribute to the GTP site. Threonine 36 is a binding site for Mg(2+). A Switch 1 motif is present at residues 49–58 (PAFVSTVGID). Mg(2+)-binding residues include threonine 54 and aspartate 77. Glycine 80 is a GTP binding site. Residues 80 to 96 (GQERYRTITTAYYRGAM) carry the Switch 2 motif. A Phosphothreonine modification is found at threonine 86. GTP is bound by residues asparagine 135, lysine 136, aspartate 138, alanine 166, and lysine 167. Residues 135–138 (NKCD) and 165–167 (SAK) each bind GDP. Residue serine 190 is modified to Phosphoserine. A disordered region spans residues 190–219 (SLEPSSSPGSNGKGPALGDTPPPQPSSCGC). The segment covering 193-203 (PSSSPGSNGKG) has biased composition (low complexity). Residues 209-219 (TPPPQPSSCGC) are compositionally biased toward pro residues. 2 S-geranylgeranyl cysteine lipidation sites follow: cysteine 217 and cysteine 219. Cysteine 219 is modified (cysteine methyl ester; partial).

The protein belongs to the small GTPase superfamily. Rab family. Interacts with RIMS1, RIMS2, RPH3A and RPH3AL. Interacts with RAB3IP. The GTP-bound form interacts with REP15. Interacts with CHM; phosphorylation at Thr-86 disrupts this interaction. Interacts with MADD (via uDENN domain); the GTP-bound form is preferred for interaction. Mg(2+) serves as cofactor. In fetal glands the majority of the proteins are methylated, whereas in neonatal and adult glands, only 50% are methylated. In terms of processing, phosphorylation of Thr-86 in the switch II region by LRRK2 prevents the association of RAB regulatory proteins, including CHM. As to expression, highest levels found in lung.

It is found in the cell membrane. It catalyses the reaction GTP + H2O = GDP + phosphate + H(+). Its activity is regulated as follows. Regulated by guanine nucleotide exchange factors (GEFs) which promote the exchange of bound GDP for free GTP. Regulated by GTPase activating proteins (GAPs) which increase the GTP hydrolysis activity. Inhibited by GDP dissociation inhibitors (GDIs) which prevent Rab-GDP dissociation. Its function is as follows. The small GTPases Rab are key regulators of intracellular membrane trafficking, from the formation of transport vesicles to their fusion with membranes. Rabs cycle between an inactive GDP-bound form and an active GTP-bound form that is able to recruit to membranes different sets of downstream effectors directly responsible for vesicle formation, movement, tethering and fusion. RAB3D may be involved in the insulin-induced exocytosis of GLUT4-containing vesicles in adipocytes. The polypeptide is GTP-binding protein Rab-3D (Rattus norvegicus (Rat)).